The sequence spans 176 residues: RNA polymerase sigma factor SigO (176 aa).

The Polymerase core binding motif lies at 30 to 43; that stretch reads DARSLDELFKQFYK. Residues 139 to 158 constitute a DNA-binding region (H-T-H motif); it reads MQEIADSLGESRQNISNIHK.

The protein belongs to the sigma-70 factor family. Interacts with RNA polymerase.

In terms of biological role, sigma factors are initiation factors that promote the attachment of RNA polymerase to specific initiation sites and are then released. Together with its coactivator RsoA, positively regulates the expression of at least three operons, including oxdC-yvrL, sigO-rsoA and yvrJ. Required for the acid stress-dependent induction of the oxalate decarboxylase oxdC. This chain is RNA polymerase sigma factor SigO (sigO), found in Bacillus subtilis (strain 168).